The following is a 326-amino-acid chain: Holliday junction branch migration complex subunit RuvB (326 aa).

The tract at residues 1 to 180 (MKSISCGKEY…FGIPLHLEFY (180 aa)) is large ATPase domain (RuvB-L). ATP contacts are provided by residues Ile-19, Arg-20, Gly-61, Lys-64, Thr-65, Thr-66, 127–129 (EDF), Arg-170, Tyr-180, and Arg-217. Thr-65 is a Mg(2+) binding site. The interval 181 to 251 (SFEELVNIIK…VADSVLLKLG (71 aa)) is small ATPAse domain (RuvB-S). Positions 254-326 (KMGLNKLDMN…QAKEYLSFQH (73 aa)) are head domain (RuvB-H). Arg-307 and Arg-312 together coordinate DNA.

This sequence belongs to the RuvB family. As to quaternary structure, homohexamer. Forms an RuvA(8)-RuvB(12)-Holliday junction (HJ) complex. HJ DNA is sandwiched between 2 RuvA tetramers; dsDNA enters through RuvA and exits via RuvB. An RuvB hexamer assembles on each DNA strand where it exits the tetramer. Each RuvB hexamer is contacted by two RuvA subunits (via domain III) on 2 adjacent RuvB subunits; this complex drives branch migration. In the full resolvosome a probable DNA-RuvA(4)-RuvB(12)-RuvC(2) complex forms which resolves the HJ.

The protein resides in the cytoplasm. It carries out the reaction ATP + H2O = ADP + phosphate + H(+). In terms of biological role, the RuvA-RuvB-RuvC complex processes Holliday junction (HJ) DNA during genetic recombination and DNA repair, while the RuvA-RuvB complex plays an important role in the rescue of blocked DNA replication forks via replication fork reversal (RFR). RuvA specifically binds to HJ cruciform DNA, conferring on it an open structure. The RuvB hexamer acts as an ATP-dependent pump, pulling dsDNA into and through the RuvAB complex. RuvB forms 2 homohexamers on either side of HJ DNA bound by 1 or 2 RuvA tetramers; 4 subunits per hexamer contact DNA at a time. Coordinated motions by a converter formed by DNA-disengaged RuvB subunits stimulates ATP hydrolysis and nucleotide exchange. Immobilization of the converter enables RuvB to convert the ATP-contained energy into a lever motion, pulling 2 nucleotides of DNA out of the RuvA tetramer per ATP hydrolyzed, thus driving DNA branch migration. The RuvB motors rotate together with the DNA substrate, which together with the progressing nucleotide cycle form the mechanistic basis for DNA recombination by continuous HJ branch migration. Branch migration allows RuvC to scan DNA until it finds its consensus sequence, where it cleaves and resolves cruciform DNA. This chain is Holliday junction branch migration complex subunit RuvB, found in Wolbachia pipientis wMel.